The following is a 340-amino-acid chain: Phenylalanine--tRNA ligase alpha subunit (340 aa).

E254 serves as a coordination point for Mg(2+).

It belongs to the class-II aminoacyl-tRNA synthetase family. Phe-tRNA synthetase alpha subunit type 1 subfamily. Tetramer of two alpha and two beta subunits. Mg(2+) serves as cofactor.

The protein resides in the cytoplasm. The enzyme catalyses tRNA(Phe) + L-phenylalanine + ATP = L-phenylalanyl-tRNA(Phe) + AMP + diphosphate + H(+). This Acidithiobacillus ferrooxidans (strain ATCC 23270 / DSM 14882 / CIP 104768 / NCIMB 8455) (Ferrobacillus ferrooxidans (strain ATCC 23270)) protein is Phenylalanine--tRNA ligase alpha subunit.